The primary structure comprises 470 residues: Probable citrate synthase, mitochondrial (470 aa).

Residues His-297, His-351, and Asp-406 contribute to the active site.

This sequence belongs to the citrate synthase family. As to quaternary structure, homodimer.

The protein localises to the mitochondrion matrix. The enzyme catalyses oxaloacetate + acetyl-CoA + H2O = citrate + CoA + H(+). It functions in the pathway carbohydrate metabolism; tricarboxylic acid cycle; isocitrate from oxaloacetate: step 1/2. This Leishmania major protein is Probable citrate synthase, mitochondrial.